The following is a 305-amino-acid chain: Phosphopantetheine adenylyltransferase (305 aa).

Belongs to the eukaryotic CoaD family.

The protein resides in the cytoplasm. It is found in the nucleus. The catalysed reaction is (R)-4'-phosphopantetheine + ATP + H(+) = 3'-dephospho-CoA + diphosphate. Reversibly transfers an adenylyl group from ATP to 4'-phosphopantetheine, yielding dephospho-CoA (dPCoA) and pyrophosphate. Plays a role in the physiological regulation of the intracellular CoA concentration. The protein is Phosphopantetheine adenylyltransferase (CAB4) of Saccharomyces cerevisiae (strain ATCC 204508 / S288c) (Baker's yeast).